The sequence spans 127 residues: Glycine cleavage system H protein (127 aa).

In terms of domain architecture, Lipoyl-binding spans 24–106 (TATLGISAFA…YGEGWLVKVQ (83 aa)). K65 carries the N6-lipoyllysine modification.

This sequence belongs to the GcvH family. As to quaternary structure, the glycine cleavage system is composed of four proteins: P, T, L and H. (R)-lipoate serves as cofactor.

Its function is as follows. The glycine cleavage system catalyzes the degradation of glycine. The H protein shuttles the methylamine group of glycine from the P protein to the T protein. The protein is Glycine cleavage system H protein of Thermosynechococcus vestitus (strain NIES-2133 / IAM M-273 / BP-1).